The chain runs to 570 residues: MSMFCYQCQEAAGCKGCTVRGVCGKTEDVAKSQDLLIYILKGISVYGVKGREVGVINKEVDNFMVEGLFATITNANFDREVFIERIKRGLQLRQELKEQVIKAGGNVENSHANKNWLDKMLSFVGLKKEEETKLPDAATWFADNVEEFNAKAEKVGVLATKDEDIRSLRELITYGIKGLAAYVEHAHNLNFDNEEIHGFMHKALAATLDDTLTVDDLVALTLETGKYGVEGMALLDKANTQTYGNPEITKVNIGVRNNPGILISGHDLRDLEQLLEQTKGTGVDVYTHSEMLPAHYYPAFKKYSHFAGNYGNAWWKQTEEFEKFNGPILMTTNCLVPPKDSYKDRVYTTGVVGFPGLKHIDADEKGEKDFSSIIEHAKKCAAPTEIEKGEIVGGFAHNQVFQLADKVVEAVKTGAIKRFFVMAGCDGRAKSRNYYTEFAQKLPKDTVILTAGCAKYKYNKLNLGDIGGIPRVLDAGQCNDSYSLALIALKLKEVFELEDINELPISYNIAWYEQKAVIVLLALLHLGVKNIHLGPTLPAFLSPNVANVLVENFGIGGITNVEDDMKMFLG.

Residues C5, C8, C17, and C23 each contribute to the [4Fe-4S] cluster site. Residues H266, E290, C334, C425, C453, C478, E513, and K515 each contribute to the hybrid [4Fe-2O-2S] cluster site. C425 bears the Cysteine persulfide mark.

This sequence belongs to the HCP family. Requires [4Fe-4S] cluster as cofactor. Hybrid [4Fe-2O-2S] cluster is required as a cofactor.

The protein resides in the cytoplasm. The catalysed reaction is A + NH4(+) + H2O = hydroxylamine + AH2 + H(+). In terms of biological role, catalyzes the reduction of hydroxylamine to form NH(3) and H(2)O. This chain is Hydroxylamine reductase, found in Clostridium tetani (strain Massachusetts / E88).